The following is a 949-amino-acid chain: Coiled-coil domain-containing protein 66 (949 aa).

A phosphothreonine mark is found at T115 and T121. A Phosphoserine modification is found at S369. A coiled-coil region spans residues 474-558; that stretch reads QVEEKCRKKQ…EQRIRELAQK (85 aa). Residues 570–949 are mediates localization to cilia, centrosomes and spindle microtubules and the interaction with PCM1, CEP290, CEP104 and CSPP1; it reads GVDTIQIEYN…NQEENFGSSF (380 aa). Phosphoserine is present on S606. Disordered regions lie at residues 691–714 and 789–809; these read QTKH…KRYI and SFSK…RTQQ.

As to quaternary structure, homodimer; disulfide-linked. Interacts with CEP290. Interacts with PCM1. Interacts with ARMC9, TOGARAM1, CSPP1 and CEP104. Interacts with CDK5RAP2, CEP152, CEP192, TBG1 and PRC1.

Its subcellular location is the cytoplasm. The protein resides in the cytoskeleton. The protein localises to the microtubule organizing center. It localises to the centrosome. It is found in the centriolar satellite. Its subcellular location is the cell projection. The protein resides in the cilium. The protein localises to the cilium basal body. It localises to the cilium axoneme. It is found in the photoreceptor inner segment. Its subcellular location is the photoreceptor outer segment. Functionally, microtubule-binding protein required for ciliogenesis. May function in ciliogenesis by mediating the transport of proteins like BBS4 to the cilium, but also through the organization of the centriolar satellites. Required for the assembly of signaling-competent cilia with proper structure and length. Mediates this function in part by regulating transition zone assembly and basal body recruitment of the IFT-B complex. Cooperates with the ciliopathy proteins CSPP1 and CEP104 during cilium length regulation. Plays two important roles during cell division. First, is required for mitotic progression via regulation of spindle assembly, organization and orientation, levels of spindle microtubules (MTs), kinetochore-fiber integrity, and chromosome alignment. Second, functions during cytokinesis in part by regulating assembly and organization of central spindle and midbody MTs Plays a role in retina morphogenesis and/or homeostasis. In Pongo abelii (Sumatran orangutan), this protein is Coiled-coil domain-containing protein 66.